Here is a 140-residue protein sequence, read N- to C-terminus: Lipoprotein MlpG (140 aa).

An N-terminal signal peptide occupies residues 1–17; the sequence is MKIINILFCLFLLMLNG. The N-palmitoyl cysteine moiety is linked to residue C18. C18 carries S-diacylglycerol cysteine lipidation. The segment at 22–57 is disordered; sequence DTNTKQTKSRQKRDLTQKEATQEKPKSKSKEDLLRE. Residues 33–57 show a composition bias toward basic and acidic residues; that stretch reads KRDLTQKEATQEKPKSKSKEDLLRE.

Belongs to the Multicopy lipoprotein (Mlp) family.

Its subcellular location is the cell outer membrane. An outer membrane protein that may participate in pathogenesis. Some human Lyme disease patients have antibodies against this protein. The Mlp proteins probably undergo intragenic recombination, generating new alleles. In Borreliella burgdorferi (strain ATCC 35210 / DSM 4680 / CIP 102532 / B31) (Borrelia burgdorferi), this protein is Lipoprotein MlpG.